We begin with the raw amino-acid sequence, 313 residues long: 4-hydroxy-3-methylbut-2-enyl diphosphate reductase (313 aa).

Cysteine 12 contributes to the [4Fe-4S] cluster binding site. (2E)-4-hydroxy-3-methylbut-2-enyl diphosphate is bound by residues histidine 41 and histidine 74. Residues histidine 41 and histidine 74 each coordinate dimethylallyl diphosphate. Residues histidine 41 and histidine 74 each coordinate isopentenyl diphosphate. Cysteine 96 is a [4Fe-4S] cluster binding site. Histidine 124 is a (2E)-4-hydroxy-3-methylbut-2-enyl diphosphate binding site. Histidine 124 provides a ligand contact to dimethylallyl diphosphate. Isopentenyl diphosphate is bound at residue histidine 124. Catalysis depends on glutamate 126, which acts as the Proton donor. Threonine 167 provides a ligand contact to (2E)-4-hydroxy-3-methylbut-2-enyl diphosphate. Cysteine 197 contributes to the [4Fe-4S] cluster binding site. (2E)-4-hydroxy-3-methylbut-2-enyl diphosphate-binding residues include serine 225, serine 226, asparagine 227, and serine 269. The dimethylallyl diphosphate site is built by serine 225, serine 226, asparagine 227, and serine 269. Positions 225, 226, 227, and 269 each coordinate isopentenyl diphosphate.

It belongs to the IspH family. It depends on [4Fe-4S] cluster as a cofactor.

The catalysed reaction is isopentenyl diphosphate + 2 oxidized [2Fe-2S]-[ferredoxin] + H2O = (2E)-4-hydroxy-3-methylbut-2-enyl diphosphate + 2 reduced [2Fe-2S]-[ferredoxin] + 2 H(+). The enzyme catalyses dimethylallyl diphosphate + 2 oxidized [2Fe-2S]-[ferredoxin] + H2O = (2E)-4-hydroxy-3-methylbut-2-enyl diphosphate + 2 reduced [2Fe-2S]-[ferredoxin] + 2 H(+). Its pathway is isoprenoid biosynthesis; dimethylallyl diphosphate biosynthesis; dimethylallyl diphosphate from (2E)-4-hydroxy-3-methylbutenyl diphosphate: step 1/1. The protein operates within isoprenoid biosynthesis; isopentenyl diphosphate biosynthesis via DXP pathway; isopentenyl diphosphate from 1-deoxy-D-xylulose 5-phosphate: step 6/6. Catalyzes the conversion of 1-hydroxy-2-methyl-2-(E)-butenyl 4-diphosphate (HMBPP) into a mixture of isopentenyl diphosphate (IPP) and dimethylallyl diphosphate (DMAPP). Acts in the terminal step of the DOXP/MEP pathway for isoprenoid precursor biosynthesis. The polypeptide is 4-hydroxy-3-methylbut-2-enyl diphosphate reductase (Photobacterium profundum (strain SS9)).